A 404-amino-acid polypeptide reads, in one-letter code: Magnesium transporter NIPA4 (404 aa).

The Extracellular segment spans residues 1–55; that stretch reads MELRVSNTSCENGSLLHLYCSSQEVLCQIVNDLSPEVPSNATFHSWQERIRQNYG. 3 N-linked (GlcNAc...) asparagine glycosylation sites follow: Asn7, Asn12, and Asn40. The chain crosses the membrane as a helical span at residues 56-76; the sequence is FYIGLGLAFLSSFLIGSSVIL. Topologically, residues 77–102 are cytoplasmic; the sequence is KKKGLLRLVATGATRAVDGGFGYLKD. A helical transmembrane segment spans residues 103–123; it reads AMWWAGFLTMAAGEVANFGAY. Ala124 is a topological domain (extracellular). A helical transmembrane segment spans residues 125-145; the sequence is FAPATVVTPLGALSVLISAIL. Over 146-153 the chain is Cytoplasmic; the sequence is SSYFLRES. The chain crosses the membrane as a helical span at residues 154–174; that stretch reads LNLLGKLGCVICVAGSTVMVI. Over 175 to 195 the chain is Extracellular; that stretch reads HAPEEEKVTTIMEMASKMKDT. Residues 196 to 216 traverse the membrane as a helical segment; it reads GFIVFAVLLLVSCLILIFVIA. At 217 to 223 the chain is on the cytoplasmic side; that stretch reads PRYGQRN. A helical membrane pass occupies residues 224–244; it reads ILIYIIICSVIGAFSVAAVKG. Residues 245–261 are Extracellular-facing; the sequence is LGITIKNFFQGLPVVRH. Residues 262-282 form a helical membrane-spanning segment; sequence PLPYILSLILALSLSTQVNFL. At 283-293 the chain is on the cytoplasmic side; that stretch reads NRALDIFNTSL. Residues 294 to 314 traverse the membrane as a helical segment; it reads VFPIYYVFFTTVVVTSSIILF. Over 315-324 the chain is Extracellular; sequence KEWYSMSAVD. Residues 325 to 345 form a helical membrane-spanning segment; sequence IAGTLSGFVTIILGVFMLHAF. The Cytoplasmic portion of the chain corresponds to 346–404; sequence KDLDISCASLPHMHKNPPPSPAPEPTVIRLEDKNVLVDNIELASTSSPEEKPKVFIIHS.

This sequence belongs to the NIPA family. Highly expressed in brain, lung, stomach, keratinocytes and leukocytes, and in all other tissues tested except liver, thyroid and fetal brain.

It localises to the cell membrane. It carries out the reaction Mg(2+)(in) = Mg(2+)(out). In terms of biological role, acts as a Mg(2+) transporter. Can also transport other divalent cations such as Ba(2+), Sr(2+) and Fe(2+) but to a much less extent than Mg(2+). May be a receptor for ligands (trioxilins A3 and B3) from the hepoxilin pathway. In Homo sapiens (Human), this protein is Magnesium transporter NIPA4 (NIPAL4).